The following is a 629-amino-acid chain: MNNNNNNKKLNKENLNEIENWNEIELTDYKKQGLDEGTSSNIYLFESNGNVVNGSIEDSPKQQQQQQQQQQQQQQQQQQQQQQQQNIISSDEEIEDKPFQDRDSNIGDGSDIDSSGDSIDIENTDYSILVPFEDEENNNGSKSKFSIKKLKSFLGPALFISVGYMDPGNWATDLEGGSRFGYQLMWVLLFSNIMALFLQTLVIKLALVTKNDLAQQCRKEYSKTVNIFLWLILELAIISTDLAEVIGTAIGLNILFGLPLIAGVAITSLDTLLFLAIQRWGIRKLELLILLLLSMITMCFVIELFLSKPIASEVFSGFVPRLNSDSVMVATGIVGATTMPHNLFLHGSVVKSRKIPNDRRKSVIKQAYRYNVIDTVLALNCAFFVNIAILMLAASVFWKSNIQVTELSEAYRLLTKLMDGKLAAVLFGLGLFLAGQSSTITGTMAGQIVMEGFIKLRIKPWLRRFITRLLAIIPAAIVIIVLGDKGTYTLLIISQVLLSIGLPFAVVPLIIFTSSYEIMGEFKNRLSIIIINSIIALFIIGLNLATIFQLINDFLHNDSIISKCLTIIFLIPLSIALCCLLLWLIISKINFFTNLLSKIFNNNNNNNNKNIINNNNNYSGNTINNQTIQ.

The Cytoplasmic portion of the chain corresponds to 1 to 151; the sequence is MNNNNNNKKL…KSKFSIKKLK (151 aa). Residues 50–119 are disordered; it reads NVVNGSIEDS…SDIDSSGDSI (70 aa). Low complexity predominate over residues 62–85; that stretch reads QQQQQQQQQQQQQQQQQQQQQQQQ. The segment covering 96-105 has biased composition (basic and acidic residues); sequence DKPFQDRDSN. Over residues 106–118 the composition is skewed to low complexity; it reads IGDGSDIDSSGDS. A helical transmembrane segment spans residues 152–172; that stretch reads SFLGPALFISVGYMDPGNWAT. Over 173 to 182 the chain is Extracellular; sequence DLEGGSRFGY. Residues 183–203 form a helical membrane-spanning segment; the sequence is QLMWVLLFSNIMALFLQTLVI. Topologically, residues 204-224 are cytoplasmic; that stretch reads KLALVTKNDLAQQCRKEYSKT. A helical transmembrane segment spans residues 225–245; the sequence is VNIFLWLILELAIISTDLAEV. Topologically, residues 246–253 are extracellular; sequence IGTAIGLN. The helical transmembrane segment at 254–274 threads the bilayer; sequence ILFGLPLIAGVAITSLDTLLF. The Cytoplasmic segment spans residues 275–286; the sequence is LAIQRWGIRKLE. A helical membrane pass occupies residues 287–307; that stretch reads LLILLLLSMITMCFVIELFLS. At 308–326 the chain is on the extracellular side; it reads KPIASEVFSGFVPRLNSDS. The chain crosses the membrane as a helical span at residues 327–347; that stretch reads VMVATGIVGATTMPHNLFLHG. Residues 348-376 lie on the Cytoplasmic side of the membrane; the sequence is SVVKSRKIPNDRRKSVIKQAYRYNVIDTV. A helical transmembrane segment spans residues 377-397; that stretch reads LALNCAFFVNIAILMLAASVF. Residues 398-421 lie on the Extracellular side of the membrane; it reads WKSNIQVTELSEAYRLLTKLMDGK. The helical transmembrane segment at 422-442 threads the bilayer; that stretch reads LAAVLFGLGLFLAGQSSTITG. Over 443 to 468 the chain is Cytoplasmic; the sequence is TMAGQIVMEGFIKLRIKPWLRRFITR. The helical transmembrane segment at 469–489 threads the bilayer; the sequence is LLAIIPAAIVIIVLGDKGTYT. Topologically, residues 490–491 are extracellular; that stretch reads LL. The helical transmembrane segment at 492 to 512 threads the bilayer; sequence IISQVLLSIGLPFAVVPLIIF. Residues 513-527 are Cytoplasmic-facing; that stretch reads TSSYEIMGEFKNRLS. Residues 528 to 548 form a helical membrane-spanning segment; it reads IIIINSIIALFIIGLNLATIF. Topologically, residues 549–565 are extracellular; sequence QLINDFLHNDSIISKCL. Asn557 carries N-linked (GlcNAc...) asparagine glycosylation. A helical transmembrane segment spans residues 566 to 586; the sequence is TIIFLIPLSIALCCLLLWLII. At 587-629 the chain is on the cytoplasmic side; that stretch reads SKINFFTNLLSKIFNNNNNNNNKNIINNNNNYSGNTINNQTIQ.

This sequence belongs to the NRAMP family.

It is found in the cell membrane. Its function is as follows. Divalent transition metal (iron and manganese) transporter. The protein is Natural resistance-associated macrophage protein 2 homolog (nramp2) of Dictyostelium discoideum (Social amoeba).